The sequence spans 130 residues: Small ribosomal subunit protein uS8 (130 aa).

Belongs to the universal ribosomal protein uS8 family. In terms of assembly, part of the 30S ribosomal subunit. Contacts proteins S5 and S12.

Its function is as follows. One of the primary rRNA binding proteins, it binds directly to 16S rRNA central domain where it helps coordinate assembly of the platform of the 30S subunit. The chain is Small ribosomal subunit protein uS8 from Edwardsiella ictaluri (strain 93-146).